Reading from the N-terminus, the 1439-residue chain is Receptor-type tyrosine-protein phosphatase kappa (1439 aa).

A signal peptide spans 1–26 (MDTTAAAALPAFVALLLLSPWPLLGS). Topologically, residues 27–752 (AQGQFSAGGC…PAKQTDRVVK (726 aa)) are extracellular. Residues 31 to 194 (FSAGGCTFDD…IQVLSYPCDK (164 aa)) enclose the MAM domain. 3 N-linked (GlcNAc...) asparagine glycosylation sites follow: Asn101, Asn140, and Asn211. The Ig-like C2-type domain occupies 196–281 (PHFLRLGDVE…TQSERGSGVS (86 aa)). A disulfide bond links Cys216 and Cys270. Fibronectin type-III domains follow at residues 294–389 (PIAP…CAEP), 392–488 (TPKT…TDED), 491–595 (GPVP…SAPT), and 597–680 (PDYE…GNLP). Residues Asn416, Asn424, Asn436, Asn462, Asn552, Asn586, Asn590, Asn607, and Asn690 are each glycosylated (N-linked (GlcNAc...) asparagine). The chain crosses the membrane as a helical span at residues 753–774 (IAGISAGILVFILLLLVVILIV). The Cytoplasmic segment spans residues 775-1439 (KKSKLAKKRK…DVALEYLESS (665 aa)). A Phosphoserine modification is found at Ser856. 2 Tyrosine-protein phosphatase domains span residues 887-1141 (FKEE…ILEA) and 1173-1435 (LKDE…ALEY). Substrate is bound by residues Asp1050, 1082–1088 (CSAGAGR), and Gln1126. The Phosphocysteine intermediate role is filled by Cys1082. Cys1376 functions as the Phosphocysteine intermediate in the catalytic mechanism.

Belongs to the protein-tyrosine phosphatase family. Receptor class 2B subfamily. In terms of processing, this protein undergoes proteolytic processing. High levels in lung, brain and colon; less in liver, pancreas, stomach, kidney, placenta and mammary carcinoma.

Its subcellular location is the cell junction. It is found in the adherens junction. The protein localises to the cell membrane. It catalyses the reaction O-phospho-L-tyrosyl-[protein] + H2O = L-tyrosyl-[protein] + phosphate. Regulation of processes involving cell contact and adhesion such as growth control, tumor invasion, and metastasis. Negative regulator of EGFR signaling pathway. Forms complexes with beta-catenin and gamma-catenin/plakoglobin. Beta-catenin may be a substrate for the catalytic activity of PTPRK/PTP-kappa. In Homo sapiens (Human), this protein is Receptor-type tyrosine-protein phosphatase kappa (PTPRK).